The sequence spans 575 residues: Trihelix transcription factor GT-2 (575 aa).

Residues 1-11 (MSGNSEGLLES) show a composition bias toward low complexity. 4 disordered regions span residues 1-44 (MSGN…RWPR), 157-181 (IPWI…HQVS), 232-256 (FSSS…SSRK), and 339-364 (GGQP…DHSI). Residues 40 to 98 (NRWPRPETLALLRIRSEMDKAFRDSTLKAPLWEEISRKMMELGYKRSSKKCKEKFENVY) form the Myb-like 1 domain. Low complexity-rich tracts occupy residues 161–172 (SSSNPSTEKSSS) and 232–241 (FSSSTSSSTA). Polar residues predominate over residues 355-364 (RKQYQSDHSI). Residues 390 to 454 (SVSPSSSRWP…RCKEKWENIN (65 aa)) enclose the Myb-like 2 domain. The segment at 513-575 (TQTEFETDQR…PMDINNNLFT (63 aa)) is disordered. The segment covering 528-555 (KEDEEEGESEEDEYDEEEEGEGDNETSE) has biased composition (acidic residues). Polar residues predominate over residues 561–575 (NKTSSPMDINNNLFT).

The protein localises to the nucleus. Its function is as follows. Probable transcription factor that binds specific DNA sequence. The chain is Trihelix transcription factor GT-2 (GT-2) from Arabidopsis thaliana (Mouse-ear cress).